A 309-amino-acid polypeptide reads, in one-letter code: Uracil phosphoribosyltransferase homolog (309 aa).

Residues 1 to 38 (MATELQCPDSMPCHNQQVNSASTPSPEQLRPGDLILDH) are disordered. The segment covering 13–26 (CHNQQVNSASTPSP) has biased composition (polar residues). The residue at position 25 (Ser25) is a Phosphoserine. GTP-binding positions include Arg133, Arg142, and 176–179 (EKGN). Residue Arg186 coordinates 5-phospho-alpha-D-ribose 1-diphosphate. Residues Arg203 and Arg232 each contribute to the GTP site. Residue 238-246 (YPILSTGNT) participates in 5-phospho-alpha-D-ribose 1-diphosphate binding. Position 299–301 (299–301 (THF)) interacts with uracil.

Belongs to the UPRTase family. Highly expressed in leukocytes, liver, spleen and thymus, with lower expression in brain, lung and skeletal muscle.

The protein localises to the cytoplasm. It is found in the nucleus. This chain is Uracil phosphoribosyltransferase homolog (UPRT), found in Homo sapiens (Human).